The primary structure comprises 560 residues: Phenylalanine--tRNA ligase beta subunit (560 aa).

A B5 domain is found at 279–354; that stretch reads LTPKEFEVDL…IAYGYNNIEP (76 aa). Residues Asp332, Asp338, Glu341, and Asp342 each coordinate Mg(2+).

The protein belongs to the phenylalanyl-tRNA synthetase beta subunit family. Type 2 subfamily. Tetramer of two alpha and two beta subunits. Mg(2+) is required as a cofactor.

It is found in the cytoplasm. The catalysed reaction is tRNA(Phe) + L-phenylalanine + ATP = L-phenylalanyl-tRNA(Phe) + AMP + diphosphate + H(+). The polypeptide is Phenylalanine--tRNA ligase beta subunit (Thermococcus sibiricus (strain DSM 12597 / MM 739)).